The sequence spans 344 residues: MTLAELLGRSRIAQVANNHKPLTYTGKKFHPTHQIIETKPSTLYRQEWGLKSAIPSKIKSRYLVYNDLDTLERITTFEPRGGTQWNRLRFQEMGVPIVSNIGRQNPFFKYISRPEDESHAKLSLFKEMKGDTDISPAAMKKRLKKITALIRSFQDEFKEWLVENHPDELKLNSNKLEDYVVKFLNKKLETKTNKKFNTEIIGTGGLSYSLPGKLKNSPNGVIQRTVVPGRILNVVKENNDNKWLAAIGGFVADVVFFQSPPSSFNSMGDFIRMKTFLFEILEASMEKNGSVSMHARLLEPQNDKTREFFNKRPIYKPLTSRRARRPSVGNIQEANNLLNIIKGN.

Ser-327 carries the phosphoserine modification.

Belongs to the bacterial ribosomal protein bS1 family. Component of the mitochondrial small ribosomal subunit (mt-SSU). Mature yeast 74S mitochondrial ribosomes consist of a small (37S) and a large (54S) subunit. The 37S small subunit contains a 15S ribosomal RNA (15S mt-rRNA) and 34 different proteins. The 54S large subunit contains a 21S rRNA (21S mt-rRNA) and 46 different proteins.

The protein localises to the mitochondrion. Component of the mitochondrial ribosome (mitoribosome), a dedicated translation machinery responsible for the synthesis of mitochondrial genome-encoded proteins, including at least some of the essential transmembrane subunits of the mitochondrial respiratory chain. The mitoribosomes are attached to the mitochondrial inner membrane and translation products are cotranslationally integrated into the membrane. bS1m functionally interacts with the 5'-UTR of mitochondrial mRNAs. This chain is Small ribosomal subunit protein bS1m (MRP51), found in Saccharomyces cerevisiae (strain ATCC 204508 / S288c) (Baker's yeast).